Here is a 662-residue protein sequence, read N- to C-terminus: Probable protein phosphatase 2C 4 (662 aa).

Ser-153 carries the phosphoserine modification. The region spanning 249–653 (DVSLENQNLQ…DDVSIVVISL (405 aa)) is the PPM-type phosphatase domain. Residues Asp-286, Gly-287, Asp-581, and Asp-644 each coordinate Mn(2+).

It belongs to the PP2C family. Mg(2+) serves as cofactor. The cofactor is Mn(2+). Expressed in seedlings, roots, leaves, stems, young inflorescences, flowers and siliques.

The protein localises to the nucleus. The enzyme catalyses O-phospho-L-seryl-[protein] + H2O = L-seryl-[protein] + phosphate. The catalysed reaction is O-phospho-L-threonyl-[protein] + H2O = L-threonyl-[protein] + phosphate. In terms of biological role, involved in leaf development regulation. This Arabidopsis thaliana (Mouse-ear cress) protein is Probable protein phosphatase 2C 4 (PLL5).